A 77-amino-acid chain; its full sequence is MSSIDKRIKEIVAEQLGVDEAQVTNEASFMDDLGADSLDTVELVMALEEEFDIEISDEDAEKIQSVQDAIDYITDHT.

The Carrier domain maps to 2–77 (SSIDKRIKEI…DAIDYITDHT (76 aa)). The residue at position 37 (serine 37) is an O-(pantetheine 4'-phosphoryl)serine.

This sequence belongs to the acyl carrier protein (ACP) family. In terms of processing, 4'-phosphopantetheine is transferred from CoA to a specific serine of apo-ACP by AcpS. This modification is essential for activity because fatty acids are bound in thioester linkage to the sulfhydryl of the prosthetic group.

The protein resides in the cytoplasm. The protein operates within lipid metabolism; fatty acid biosynthesis. In terms of biological role, carrier of the growing fatty acid chain in fatty acid biosynthesis. This is Acyl carrier protein from Geotalea daltonii (strain DSM 22248 / JCM 15807 / FRC-32) (Geobacter daltonii).